Here is a 475-residue protein sequence, read N- to C-terminus: Sensor histidine kinase QseE (475 aa).

The Cytoplasmic segment spans residues 1–13 (MKRWPVFPRSLRQ). A helical membrane pass occupies residues 14-34 (LVMLAFLLILLPLLVLAWQAW). Residues 35-173 (QSLNALSDQA…LQREIAERGQ (139 aa)) lie on the Periplasmic side of the membrane. Residues 174 to 194 (YFGWQSLVLFLVSLVMVLLFT) traverse the membrane as a helical segment. The Cytoplasmic portion of the chain corresponds to 195-475 (RMIIGPVKNI…IELPSSKNTK (281 aa)). Residues 256 to 472 (HLSHELKTPL…CFRIELPSSK (217 aa)) form the Histidine kinase domain. His-259 carries the phosphohistidine; by autocatalysis modification.

Autophosphorylated.

The protein localises to the cell inner membrane. It carries out the reaction ATP + protein L-histidine = ADP + protein N-phospho-L-histidine.. Member of the two-component regulatory system QseF/QseE involved in the regulation of virulence and metabolism in EHEC. Required for pedestal formation in host epithelial cells during infection. Autophosphorylates in response to epinephrine, sulfate or phosphate and then probably transfers its phosphate group to QseF. The protein is Sensor histidine kinase QseE (qseE) of Escherichia coli O157:H7.